The primary structure comprises 213 residues: Thymidylate kinase (213 aa).

An ATP-binding site is contributed by 10 to 17 (GLEGAGKT).

Belongs to the thymidylate kinase family.

It catalyses the reaction dTMP + ATP = dTDP + ADP. Its function is as follows. Phosphorylation of dTMP to form dTDP in both de novo and salvage pathways of dTTP synthesis. The sequence is that of Thymidylate kinase from Escherichia coli O6:H1 (strain CFT073 / ATCC 700928 / UPEC).